The following is a 433-amino-acid chain: Enolase (433 aa).

Gln-167 is a (2R)-2-phosphoglycerate binding site. Catalysis depends on Glu-209, which acts as the Proton donor. Mg(2+) contacts are provided by Asp-246, Glu-291, and Asp-318. The (2R)-2-phosphoglycerate site is built by Lys-343, Arg-372, Ser-373, and Lys-394. The Proton acceptor role is filled by Lys-343.

The protein belongs to the enolase family. As to quaternary structure, component of the RNA degradosome, a multiprotein complex involved in RNA processing and mRNA degradation. Requires Mg(2+) as cofactor.

It localises to the cytoplasm. The protein localises to the secreted. It is found in the cell surface. It catalyses the reaction (2R)-2-phosphoglycerate = phosphoenolpyruvate + H2O. The protein operates within carbohydrate degradation; glycolysis; pyruvate from D-glyceraldehyde 3-phosphate: step 4/5. Functionally, catalyzes the reversible conversion of 2-phosphoglycerate (2-PG) into phosphoenolpyruvate (PEP). It is essential for the degradation of carbohydrates via glycolysis. The protein is Enolase of Hamiltonella defensa subsp. Acyrthosiphon pisum (strain 5AT).